A 400-amino-acid chain; its full sequence is ATP phosphoribosyltransferase regulatory subunit (400 aa).

This sequence belongs to the class-II aminoacyl-tRNA synthetase family. HisZ subfamily. In terms of assembly, heteromultimer composed of HisG and HisZ subunits.

The protein localises to the cytoplasm. Its pathway is amino-acid biosynthesis; L-histidine biosynthesis; L-histidine from 5-phospho-alpha-D-ribose 1-diphosphate: step 1/9. In terms of biological role, required for the first step of histidine biosynthesis. May allow the feedback regulation of ATP phosphoribosyltransferase activity by histidine. In Hahella chejuensis (strain KCTC 2396), this protein is ATP phosphoribosyltransferase regulatory subunit.